The primary structure comprises 268 residues: Tryptophan synthase alpha chain (268 aa).

Catalysis depends on proton acceptor residues Glu49 and Asp60.

This sequence belongs to the TrpA family. In terms of assembly, tetramer of two alpha and two beta chains.

The catalysed reaction is (1S,2R)-1-C-(indol-3-yl)glycerol 3-phosphate + L-serine = D-glyceraldehyde 3-phosphate + L-tryptophan + H2O. It functions in the pathway amino-acid biosynthesis; L-tryptophan biosynthesis; L-tryptophan from chorismate: step 5/5. The alpha subunit is responsible for the aldol cleavage of indoleglycerol phosphate to indole and glyceraldehyde 3-phosphate. In Escherichia coli O17:K52:H18 (strain UMN026 / ExPEC), this protein is Tryptophan synthase alpha chain.